The following is a 100-amino-acid chain: Small ribosomal subunit protein uS14 (100 aa).

Belongs to the universal ribosomal protein uS14 family. As to quaternary structure, part of the 30S ribosomal subunit. Contacts proteins S3 and S10.

Binds 16S rRNA, required for the assembly of 30S particles and may also be responsible for determining the conformation of the 16S rRNA at the A site. The chain is Small ribosomal subunit protein uS14 from Prochlorococcus marinus (strain MIT 9313).